Here is a 20-residue protein sequence, read N- to C-terminus: Luminal-binding protein (20 aa).

Belongs to the heat shock protein 70 family.

It localises to the endoplasmic reticulum lumen. Probably plays a role in facilitating the assembly of multimeric protein complexes inside the ER. The chain is Luminal-binding protein from Phaseolus vulgaris (Kidney bean).